The chain runs to 155 residues: Large ribosomal subunit protein uL16m (155 aa).

It belongs to the universal ribosomal protein uL16 family.

It localises to the mitochondrion. This chain is Large ribosomal subunit protein uL16m (RPL16), found in Petunia hybrida (Petunia).